A 30-amino-acid polypeptide reads, in one-letter code: Thaumatin-like protein (30 aa).

This sequence belongs to the thaumatin family.

The protein resides in the secreted. In terms of biological role, has antifungal activity against C.comatus, F.oxysporum and P.ostreatus. This Phaseolus vulgaris (Kidney bean) protein is Thaumatin-like protein.